Here is a 766-residue protein sequence, read N- to C-terminus: General transcription and DNA repair factor IIH helicase/translocase subunit XPB2 (766 aa).

Residues 1-56 (MGNDERKRPTKKMKYGGKDDQKMKNIQNVEDYYDDADEDSRDGEGEEKRRDFTDLE) form a disordered region. Residues 31–41 (DYYDDADEDSR) are compositionally biased toward acidic residues. Basic and acidic residues predominate over residues 42–56 (DGEGEEKRRDFTDLE). The Helicase ATP-binding domain maps to 293–455 (MFGNGRARSG…DLNFLIGPKL (163 aa)). 306–313 (LPCGAGKS) contacts ATP. Residues 408-411 (DEVH) carry the DEVH box motif. Residues 510–676 (RACEFLIRFH…SLPPPDAGSS (167 aa)) enclose the Helicase C-terminal domain. Residues 739–748 (SGRQKSGNQS) are compositionally biased toward polar residues. The segment at 739 to 766 (SGRQKSGNQSKKPKDPTKRHNIFKKRYV) is disordered. The Nuclear localization signal signature appears at 749–765 (KKPKDPTKRHNIFKKRY). Over residues 757–766 (RHNIFKKRYV) the composition is skewed to basic residues.

Belongs to the helicase family. RAD25/XPB subfamily. In terms of assembly, component of the 7-subunit TFIIH core complex composed of XPB, XPD, TFB1/GTF2H1, GTF2H2/P44, TFB4/GTF2H3, TFB2/GTF2H4 and TFB5/GTF2H5, which is active in NER. The core complex associates with the 3-subunit CDK-activating kinase (CAK) module composed of CYCH1/cyclin H1, CDKD and MAT1/At4g30820 to form the 10-subunit holoenzyme (holo-TFIIH) active in transcription. As to expression, expressed ubiquitously.

The protein localises to the nucleus. It carries out the reaction Couples ATP hydrolysis with the unwinding of duplex DNA by translocating in the 3'-5' direction.. The enzyme catalyses ATP + H2O = ADP + phosphate + H(+). ATP-dependent 3'-5' DNA helicase/translocase; binds dsDNA rather than ssDNA, unzipping it in a translocase rather than classical helicase activity. Component of the general transcription and DNA repair factor IIH (TFIIH) core complex. When complexed to CDK-activating kinase (CAK), involved in RNA transcription by RNA polymerase II. The ATPase activity of XPB/ERCC3, but not its helicase activity, is required for DNA opening; it may wrap around the damaged DNA wedging it open, causing localized melting and twisting that allows XPD/ERCC2 helicase to anchor. The ATP-dependent helicase activity of XPB/ERCC3 may be required for promoter escape. Also involved in transcription-coupled nucleotide excision repair (NER) of damaged DNA. In NER, TFIIH acts by opening DNA around the lesion to allow the excision of the damaged oligonucleotide and its replacement by a new DNA fragment. The structure of the TFIIH transcription complex differs from the NER-TFIIH complex. Partially complements UV sensitivity of a yeast SSL2 mutation. This Arabidopsis thaliana (Mouse-ear cress) protein is General transcription and DNA repair factor IIH helicase/translocase subunit XPB2 (XPB2).